The sequence spans 252 residues: MRPLIVIGNWKMNGSLANNQDWVKTVARGMESGMPSGRKYAVCPPFPYLQQCADLIKGHSLAFLSLGAQDASAYGSGVYTGEVAAAMLKEFGCTCVIVGHSERRQMHQEVDEVIASKALQVLDNSMTPVICVGETADERNSGRAQEIVCSQVAKQVGVLQDRLVDCLIAYEPVWAIGTGKVASAQVAQDMHRAIRLQLAEFNEDVASHVGILYGGSVKPDNAVELFAMPDIDGGLVGGASLSPQDFLAICKA.

9–11 (NWK) is a substrate binding site. His-100 serves as the catalytic Electrophile. The active-site Proton acceptor is the Glu-171. Substrate-binding positions include Gly-177, Ser-216, and 237–238 (GG).

This sequence belongs to the triosephosphate isomerase family. In terms of assembly, homodimer.

It is found in the cytoplasm. The catalysed reaction is D-glyceraldehyde 3-phosphate = dihydroxyacetone phosphate. Its pathway is carbohydrate biosynthesis; gluconeogenesis. It functions in the pathway carbohydrate degradation; glycolysis; D-glyceraldehyde 3-phosphate from glycerone phosphate: step 1/1. Functionally, involved in the gluconeogenesis. Catalyzes stereospecifically the conversion of dihydroxyacetone phosphate (DHAP) to D-glyceraldehyde-3-phosphate (G3P). The sequence is that of Triosephosphate isomerase from Polynucleobacter necessarius subsp. necessarius (strain STIR1).